We begin with the raw amino-acid sequence, 445 residues long: MRALVLAAGKGTRMKSKIPKVLHPLSGRPMIEWVIETAGKVAQKVGVVLGFEAELVRKALPEWVDVFVQGEQLGTAHAVMCAKDFIEPGDDVLILYGDVPLISENTLKRMIEEHRKGADVTILVADLEDPSGYGRVIQDGDKYRIIEDTDLPEELKSVTTINTGFYVFSGDFLLRALPEIKNENAKGEYYLTDAVNFAEKVRVVRTDDLLEITGVNTRKTLVWLEEQLRMRKIEELLENGVTILDPATTYIHYSVEIGMDTVIYPMTFIEGKSRVGENCEIGPMTRIVDCEIGNNVKITRSECFKSVIEDDVSVGPFARLREGTILKKSSKIGNFVEIKKSTIGEGTKAQHLSYIGDAFVGKNVNVGAGTITCNYDGKKKNPTFIEDGAFIGSNSSLVAPVRIGKGALIGAGSVITEDVPPYSLGLGRARQVVKEGWVLKKRKEE.

The pyrophosphorylase stretch occupies residues 1–218; the sequence is MRALVLAAGK…LLEITGVNTR (218 aa). Residues 6-9, Lys20, Gln69, 74-75, 96-98, Gly134, Glu147, Asn162, and Asn216 contribute to the UDP-N-acetyl-alpha-D-glucosamine site; these read LAAG, GT, and YGD. Residue Asp98 participates in Mg(2+) binding. Asn216 contacts Mg(2+). A linker region spans residues 219–239; that stretch reads KTLVWLEEQLRMRKIEELLEN. The segment at 240-445 is N-acetyltransferase; it reads GVTILDPATT…GWVLKKRKEE (206 aa). UDP-N-acetyl-alpha-D-glucosamine contacts are provided by Arg321 and Lys339. The active-site Proton acceptor is the His351. Residues Tyr354 and Asn365 each contribute to the UDP-N-acetyl-alpha-D-glucosamine site. Acetyl-CoA-binding positions include Ala368, 374–375, Ser393, Ala411, and Arg428; that span reads NY.

It in the N-terminal section; belongs to the N-acetylglucosamine-1-phosphate uridyltransferase family. This sequence in the C-terminal section; belongs to the transferase hexapeptide repeat family. In terms of assembly, homotrimer. Mg(2+) serves as cofactor.

Its subcellular location is the cytoplasm. It carries out the reaction alpha-D-glucosamine 1-phosphate + acetyl-CoA = N-acetyl-alpha-D-glucosamine 1-phosphate + CoA + H(+). It catalyses the reaction N-acetyl-alpha-D-glucosamine 1-phosphate + UTP + H(+) = UDP-N-acetyl-alpha-D-glucosamine + diphosphate. It participates in nucleotide-sugar biosynthesis; UDP-N-acetyl-alpha-D-glucosamine biosynthesis; N-acetyl-alpha-D-glucosamine 1-phosphate from alpha-D-glucosamine 6-phosphate (route II): step 2/2. The protein operates within nucleotide-sugar biosynthesis; UDP-N-acetyl-alpha-D-glucosamine biosynthesis; UDP-N-acetyl-alpha-D-glucosamine from N-acetyl-alpha-D-glucosamine 1-phosphate: step 1/1. It functions in the pathway bacterial outer membrane biogenesis; LPS lipid A biosynthesis. In terms of biological role, catalyzes the last two sequential reactions in the de novo biosynthetic pathway for UDP-N-acetylglucosamine (UDP-GlcNAc). The C-terminal domain catalyzes the transfer of acetyl group from acetyl coenzyme A to glucosamine-1-phosphate (GlcN-1-P) to produce N-acetylglucosamine-1-phosphate (GlcNAc-1-P), which is converted into UDP-GlcNAc by the transfer of uridine 5-monophosphate (from uridine 5-triphosphate), a reaction catalyzed by the N-terminal domain. The chain is Bifunctional protein GlmU from Thermotoga maritima (strain ATCC 43589 / DSM 3109 / JCM 10099 / NBRC 100826 / MSB8).